We begin with the raw amino-acid sequence, 479 residues long: Ribosomal RNA small subunit methyltransferase F (479 aa).

S-adenosyl-L-methionine contacts are provided by residues 125–131 (AAAPGSK), glutamate 149, aspartate 176, and aspartate 194. Cysteine 247 functions as the Nucleophile in the catalytic mechanism.

This sequence belongs to the class I-like SAM-binding methyltransferase superfamily. RsmB/NOP family.

It is found in the cytoplasm. The catalysed reaction is cytidine(1407) in 16S rRNA + S-adenosyl-L-methionine = 5-methylcytidine(1407) in 16S rRNA + S-adenosyl-L-homocysteine + H(+). Functionally, specifically methylates the cytosine at position 1407 (m5C1407) of 16S rRNA. The protein is Ribosomal RNA small subunit methyltransferase F of Escherichia coli O127:H6 (strain E2348/69 / EPEC).